The primary structure comprises 309 residues: NAD-dependent protein deacylase sirtuin-5A, mitochondrial (309 aa).

A mitochondrion-targeting transit peptide spans 1-35; the sequence is MILLTFHTRRLVSHAYCGLKPASQKKSIALEMTRP. The Deacetylase sirtuin-type domain maps to 36–306; the sequence is SSNLADFREA…PPALARHETE (271 aa). 57–76 is a binding site for NAD(+); it reads GAGVSAESGVPTFRGAGGYW. Residues Tyr-101 and Arg-104 each contribute to the substrate site. 139–142 is an NAD(+) binding site; that stretch reads QNID. The Proton acceptor role is filled by His-157. Residues Cys-165, Cys-168, Cys-206, and Cys-211 each contribute to the Zn(2+) site. Residues 248-250, 274-276, and Cys-292 each bind NAD(+); these read GTS and NME.

This sequence belongs to the sirtuin family. Class III subfamily. Zn(2+) serves as cofactor.

Its subcellular location is the mitochondrion. The protein resides in the cytoplasm. It is found in the cytosol. It localises to the nucleus. It catalyses the reaction N(6)-malonyl-L-lysyl-[protein] + NAD(+) + H2O = 2''-O-malonyl-ADP-D-ribose + nicotinamide + L-lysyl-[protein]. It carries out the reaction N(6)-succinyl-L-lysyl-[protein] + NAD(+) + H2O = 2''-O-succinyl-ADP-D-ribose + nicotinamide + L-lysyl-[protein]. The enzyme catalyses N(6)-glutaryl-L-lysyl-[protein] + NAD(+) + H2O = 2''-O-glutaryl-ADP-D-ribose + nicotinamide + L-lysyl-[protein]. Functionally, NAD-dependent lysine demalonylase, desuccinylase and deglutarylase that specifically removes malonyl, succinyl and glutaryl groups on target proteins. Has weak NAD-dependent protein deacetylase activity; however this activity may not be physiologically relevant in vivo. The polypeptide is NAD-dependent protein deacylase sirtuin-5A, mitochondrial (sirt5-a) (Xenopus laevis (African clawed frog)).